The primary structure comprises 437 residues: Adenylosuccinate synthetase (437 aa).

GTP contacts are provided by residues 12 to 18 (GDEGKGK) and 40 to 42 (GHT). Asp13 acts as the Proton acceptor in catalysis. Mg(2+)-binding residues include Asp13 and Gly40. IMP contacts are provided by residues 13–16 (DEGK), 38–41 (NAGH), Thr131, Arg145, Gln226, Thr241, and Arg305. His41 acts as the Proton donor in catalysis. Substrate is bound at residue 301–307 (ATTGRRR). GTP-binding positions include Arg307, 333–335 (KLD), and 415–417 (SVG).

The protein belongs to the adenylosuccinate synthetase family. As to quaternary structure, homodimer. Mg(2+) serves as cofactor.

It is found in the cytoplasm. It catalyses the reaction IMP + L-aspartate + GTP = N(6)-(1,2-dicarboxyethyl)-AMP + GDP + phosphate + 2 H(+). The protein operates within purine metabolism; AMP biosynthesis via de novo pathway; AMP from IMP: step 1/2. Plays an important role in the de novo pathway of purine nucleotide biosynthesis. Catalyzes the first committed step in the biosynthesis of AMP from IMP. This chain is Adenylosuccinate synthetase, found in Desulfotalea psychrophila (strain LSv54 / DSM 12343).